Reading from the N-terminus, the 221-residue chain is Protein myomaker (221 aa).

At 1 to 3 the chain is on the extracellular side; the sequence is MGT. Residues 4–24 form a helical membrane-spanning segment; that stretch reads LVAKLLLPTLSSLAFLPTVSI. Residues 25–34 lie on the Cytoplasmic side of the membrane; it reads AAKRRFHMEA. A helical membrane pass occupies residues 35 to 55; sequence MVYLFTLFFVALHHACNGPGL. The Extracellular portion of the chain corresponds to 56-64; it reads SVLCFMRHD. The chain crosses the membrane as a helical span at residues 65 to 85; sequence ILEYFSVYGTALSMWVSLMAL. Topologically, residues 86–92 are cytoplasmic; that stretch reads ADFDEPK. Residues 93 to 110 form a helical membrane-spanning segment; the sequence is RSTFVMFGVLTIAVRIYH. Residues 111-113 lie on the Extracellular side of the membrane; the sequence is DRW. A helical transmembrane segment spans residues 114–134; sequence GYGVYSGPIGTAILIIAAKWL. Topologically, residues 135-153 are cytoplasmic; sequence QKMKEKKGLYPDKSVYTQQ. A helical transmembrane segment spans residues 154 to 174; that stretch reads IGPGLCFGALALMLRFFFEDW. A topological domain (extracellular) is located at residue D175. A helical transmembrane segment spans residues 176–196; sequence YTYVHSFYHCALAMSFVLLLP. The Cytoplasmic portion of the chain corresponds to 197–221; sequence KVNKKAGSPGTPAKLDCSTLCCACV. S-palmitoyl cysteine attachment occurs at residues C217 and C218.

This sequence belongs to the TMEM8 family. In terms of assembly, interacts with MYMX. In terms of processing, palmitoylated at the C-terminus; palmitoylation promotes localization to the Golgi apparatus.

It is found in the cell membrane. Its subcellular location is the golgi apparatus membrane. In terms of biological role, myoblast-specific protein that mediates myoblast fusion, an essential step for the formation of multi-nucleated muscle fibers. Actively participates in the membrane fusion reaction by mediating the mixing of cell membrane lipids (hemifusion) upstream of MYMX. Acts independently of MYMX. Involved in skeletal muscle regeneration in response to injury by mediating the fusion of satellite cells, a population of muscle stem cells, with injured myofibers. Also involved in skeletal muscle hypertrophy, probably by mediating the fusion of satellite cells with myofibers. The polypeptide is Protein myomaker (Homo sapiens (Human)).